Here is a 251-residue protein sequence, read N- to C-terminus: Ubiquinone/menaquinone biosynthesis C-methyltransferase UbiE (251 aa).

Residues Thr-74, Asp-95, and 123–124 (NA) each bind S-adenosyl-L-methionine.

This sequence belongs to the class I-like SAM-binding methyltransferase superfamily. MenG/UbiE family.

It catalyses the reaction a 2-demethylmenaquinol + S-adenosyl-L-methionine = a menaquinol + S-adenosyl-L-homocysteine + H(+). The catalysed reaction is a 2-methoxy-6-(all-trans-polyprenyl)benzene-1,4-diol + S-adenosyl-L-methionine = a 5-methoxy-2-methyl-3-(all-trans-polyprenyl)benzene-1,4-diol + S-adenosyl-L-homocysteine + H(+). It functions in the pathway quinol/quinone metabolism; menaquinone biosynthesis; menaquinol from 1,4-dihydroxy-2-naphthoate: step 2/2. The protein operates within cofactor biosynthesis; ubiquinone biosynthesis. In terms of biological role, methyltransferase required for the conversion of demethylmenaquinol (DMKH2) to menaquinol (MKH2) and the conversion of 2-polyprenyl-6-methoxy-1,4-benzoquinol (DDMQH2) to 2-polyprenyl-3-methyl-6-methoxy-1,4-benzoquinol (DMQH2). This is Ubiquinone/menaquinone biosynthesis C-methyltransferase UbiE from Shewanella sediminis (strain HAW-EB3).